The following is a 183-amino-acid chain: Ribosome-recycling factor (183 aa).

This sequence belongs to the RRF family.

It is found in the cytoplasm. Its function is as follows. Responsible for the release of ribosomes from messenger RNA at the termination of protein biosynthesis. May increase the efficiency of translation by recycling ribosomes from one round of translation to another. The sequence is that of Ribosome-recycling factor from Treponema pallidum (strain Nichols).